A 417-amino-acid polypeptide reads, in one-letter code: Phosphoglycerate kinase 2 (417 aa).

Ser2 is subject to N-acetylserine. 2 positions are modified to phosphoserine: Ser2 and Ser4. An N6-acetyllysine modification is found at Lys11. (2R)-3-phosphoglycerate contacts are provided by Val23, Asp24, Phe25, Asn26, Gln38, Arg39, Ser62, His63, Gly65, and Arg66. 3 positions are modified to N6-acetyllysine: Lys75, Lys86, and Lys97. 2 residues coordinate (2R)-3-phosphoglycerate: Leu122 and Arg123. N6-acetyllysine occurs at positions 131 and 146. (2R)-3-phosphoglycerate contacts are provided by His170 and Arg171. Position 196 is a phosphotyrosine (Tyr196). Position 199 is an N6-acetyllysine (Lys199). Gly214 is an ADP binding site. Position 214 (Gly214) interacts with CDP. Positions 215 and 216 each coordinate AMP. Ala215 is a binding site for ATP. Ala215 is a Mg(2+) binding site. Residues Ala218 and Asp219 each contribute to the Mg(2+) site. Asp219 contributes to the CDP binding site. AMP is bound at residue Lys220. Residue Lys220 coordinates ATP. Gly238 provides a ligand contact to ADP. CDP is bound at residue Gly238. Gly239 is an AMP binding site. Gly239 is a binding site for ATP. 2 positions are modified to N6-acetyllysine: Lys267 and Lys291. Ala313 is an AMP binding site. Ala313 is a binding site for ATP. CDP contacts are provided by Gly338 and Phe343. Phe343 is a binding site for ADP. Residue Glu344 coordinates AMP. Positions 344, 375, and 376 each coordinate ATP. Asp375 contributes to the Mg(2+) binding site.

It belongs to the phosphoglycerate kinase family. In terms of assembly, monomer. Mg(2+) serves as cofactor. In terms of tissue distribution, testis specific.

The protein resides in the cytoplasm. It catalyses the reaction (2R)-3-phosphoglycerate + ATP = (2R)-3-phospho-glyceroyl phosphate + ADP. The protein operates within carbohydrate degradation; glycolysis; pyruvate from D-glyceraldehyde 3-phosphate: step 2/5. In terms of biological role, essential for sperm motility and male fertility but is not required for the completion of spermatogenesis. The protein is Phosphoglycerate kinase 2 of Sus scrofa (Pig).